The following is a 309-amino-acid chain: Ferrochelatase (309 aa).

Positions 185 and 262 each coordinate Fe cation.

It belongs to the ferrochelatase family.

It localises to the cytoplasm. The catalysed reaction is heme b + 2 H(+) = protoporphyrin IX + Fe(2+). The protein operates within porphyrin-containing compound metabolism; protoheme biosynthesis; protoheme from protoporphyrin-IX: step 1/1. In terms of biological role, catalyzes the ferrous insertion into protoporphyrin IX. The chain is Ferrochelatase from Campylobacter jejuni subsp. jejuni serotype O:6 (strain 81116 / NCTC 11828).